Consider the following 163-residue polypeptide: Phosphopantetheine adenylyltransferase (163 aa).

Residue S10 coordinates substrate. Residues 10–11 (SF) and H18 contribute to the ATP site. The substrate site is built by K42, L78, and K92. Residues 93-95 (GVR), E103, and 127-133 (HAHVSSS) contribute to the ATP site.

The protein belongs to the bacterial CoaD family. Homohexamer. It depends on Mg(2+) as a cofactor.

The protein resides in the cytoplasm. The catalysed reaction is (R)-4'-phosphopantetheine + ATP + H(+) = 3'-dephospho-CoA + diphosphate. It functions in the pathway cofactor biosynthesis; coenzyme A biosynthesis; CoA from (R)-pantothenate: step 4/5. Functionally, reversibly transfers an adenylyl group from ATP to 4'-phosphopantetheine, yielding dephospho-CoA (dPCoA) and pyrophosphate. The polypeptide is Phosphopantetheine adenylyltransferase (Clavibacter michiganensis subsp. michiganensis (strain NCPPB 382)).